Here is a 252-residue protein sequence, read N- to C-terminus: 3-dehydroquinate dehydratase (252 aa).

3-dehydroquinate-binding positions include Ser-21, 46–48 (EWR), and Arg-82. Catalysis depends on His-143, which acts as the Proton donor/acceptor. Lys-170 serves as the catalytic Schiff-base intermediate with substrate. 3-dehydroquinate contacts are provided by Arg-213, Ser-232, and Gln-236.

The protein belongs to the type-I 3-dehydroquinase family. As to quaternary structure, homodimer.

The catalysed reaction is 3-dehydroquinate = 3-dehydroshikimate + H2O. It functions in the pathway metabolic intermediate biosynthesis; chorismate biosynthesis; chorismate from D-erythrose 4-phosphate and phosphoenolpyruvate: step 3/7. Functionally, involved in the third step of the chorismate pathway, which leads to the biosynthesis of aromatic amino acids. Catalyzes the cis-dehydration of 3-dehydroquinate (DHQ) and introduces the first double bond of the aromatic ring to yield 3-dehydroshikimate. This is 3-dehydroquinate dehydratase from Shigella dysenteriae.